Reading from the N-terminus, the 470-residue chain is tRNA modification GTPase MnmE (470 aa).

Lys-27, Glu-90, and Arg-129 together coordinate (6S)-5-formyl-5,6,7,8-tetrahydrofolate. The 161-residue stretch at Gly-231 to Leu-391 folds into the TrmE-type G domain. Residues Asn-241–Ser-246, Thr-260–Thr-266, and Asp-285–Gly-288 contribute to the GTP site. Mg(2+) is bound by residues Ser-245 and Thr-266. Residue Lys-470 participates in (6S)-5-formyl-5,6,7,8-tetrahydrofolate binding.

The protein belongs to the TRAFAC class TrmE-Era-EngA-EngB-Septin-like GTPase superfamily. TrmE GTPase family. In terms of assembly, homodimer. Heterotetramer of two MnmE and two MnmG subunits. The cofactor is K(+).

The protein resides in the cytoplasm. Exhibits a very high intrinsic GTPase hydrolysis rate. Involved in the addition of a carboxymethylaminomethyl (cmnm) group at the wobble position (U34) of certain tRNAs, forming tRNA-cmnm(5)s(2)U34. In Syntrophobacter fumaroxidans (strain DSM 10017 / MPOB), this protein is tRNA modification GTPase MnmE.